The sequence spans 301 residues: Alpha-ketoglutarate-dependent sulfate ester dioxygenase (301 aa).

Histidine 81 is a binding site for substrate. Fe cation is bound by residues histidine 108 and aspartate 110. Position 111 (valine 111) interacts with substrate. Threonine 135 serves as a coordination point for 2-oxoglutarate. Histidine 264 contributes to the Fe cation binding site. The 2-oxoglutarate site is built by arginine 275 and arginine 279.

This sequence belongs to the TfdA dioxygenase family. Homotetramer. Fe(2+) serves as cofactor.

It catalyses the reaction a primary linear alkyl sulfate ester + 2-oxoglutarate + O2 = an aldehyde + sulfate + succinate + CO2 + H(+). The enzyme catalyses 2-ethylhexyl sulfate + 2-oxoglutarate + O2 = 2-ethylhexanal + sulfate + succinate + CO2 + H(+). The catalysed reaction is decyl sulfate + 2-oxoglutarate + O2 = decanal + sulfate + succinate + CO2 + H(+). It carries out the reaction hexyl sulfate + 2-oxoglutarate + O2 = hexanal + sulfate + succinate + CO2 + H(+). It catalyses the reaction nonyl sufate + 2-oxoglutarate + O2 = nonanal + sulfate + succinate + CO2 + H(+). Its activity is regulated as follows. Strongly stimulated by ascorbate. Functionally, catalyzes the oxygenolytic cleavage of 2-ethylhexyl sulfate (2-EHS) in the presence of alpha-ketoglutarate to yield 2-ethyl-hexanal and succinate, the decarboxylated form of alpha-ketoglutarate. It can accept a wide range of alpha-keto acids including 2-oxo-valerate, 2-oxo-adipate, 2-oxo-octanoate, 3-methyl-2-oxo-butyrate, oxaloacetate-alpha-ketoadipate, and alpha-ketooctanoate. It can catalyze the cleavage of medium-chain alkyl sulfate esters such as butylsulfate, pentylsulfate, hexylsulfate, heptylsulfate, octylsulfate, nonylsulfate, decylsulfate and sodium dodecyl sulfate (SDS). This is Alpha-ketoglutarate-dependent sulfate ester dioxygenase from Pseudomonas putida (Arthrobacter siderocapsulatus).